We begin with the raw amino-acid sequence, 137 residues long: Large ribosomal subunit protein uL16 (137 aa).

Belongs to the universal ribosomal protein uL16 family. As to quaternary structure, part of the 50S ribosomal subunit.

Functionally, binds 23S rRNA and is also seen to make contacts with the A and possibly P site tRNAs. In Bradyrhizobium sp. (strain ORS 278), this protein is Large ribosomal subunit protein uL16.